Consider the following 111-residue polypeptide: Large ribosomal subunit protein P1 (111 aa).

The segment covering 65–89 has biased composition (low complexity); that stretch reads SGAGSGPAPAAAAAAPAAGGAAPAA. The interval 65 to 111 is disordered; it reads SGAGSGPAPAAAAAAPAAGGAAPAAETKKKEEPKEESDDDMGFGLFD.

Belongs to the eukaryotic ribosomal protein P1/P2 family. As to quaternary structure, P1 and P2 exist as dimers at the large ribosomal subunit.

Plays an important role in the elongation step of protein synthesis. This chain is Large ribosomal subunit protein P1, found in Caenorhabditis elegans.